The sequence spans 274 residues: Diaminopimelate epimerase (274 aa).

Residues N11, Q44, and N64 each contribute to the substrate site. The active-site Proton donor is the C73. Residues 74-75 (GN), N157, N190, and 208-209 (ER) each bind substrate. The Proton acceptor role is filled by C217. 218–219 (GS) contacts substrate.

Belongs to the diaminopimelate epimerase family. In terms of assembly, homodimer.

The protein localises to the cytoplasm. The catalysed reaction is (2S,6S)-2,6-diaminopimelate = meso-2,6-diaminopimelate. Its pathway is amino-acid biosynthesis; L-lysine biosynthesis via DAP pathway; DL-2,6-diaminopimelate from LL-2,6-diaminopimelate: step 1/1. Its function is as follows. Catalyzes the stereoinversion of LL-2,6-diaminopimelate (L,L-DAP) to meso-diaminopimelate (meso-DAP), a precursor of L-lysine and an essential component of the bacterial peptidoglycan. The sequence is that of Diaminopimelate epimerase from Escherichia coli O81 (strain ED1a).